Consider the following 317-residue polypeptide: Apolipoprotein E (317 aa).

An N-terminal signal peptide occupies residues 1–18; the sequence is MKVLWAALLVTFLAGCQA. 8 repeat units span residues 80 to 101, 102 to 123, 124 to 145, 146 to 167, 168 to 189, 190 to 211, 212 to 233, and 234 to 255. Positions 80–255 are 8 X 22 AA approximate tandem repeats; it reads TLMDETMKEL…RLDEVKEQVA (176 aa). M143 carries the methionine sulfoxide modification. A Phosphoserine modification is found at S147. The segment at 158-168 is LDL and other lipoprotein receptors binding; the sequence is HLRKLRKRLLR. 162-165 provides a ligand contact to heparin; the sequence is LRKR. Residues 210-290 form a lipid-binding and lipoprotein association region; it reads AATVGSLASQ…SWFEPLVEDM (81 aa). O-linked (GalNAc...) threonine glycosylation is present at T212. Residue 229–236 coordinates heparin; that stretch reads GERLRARM. The tract at residues 266–317 is homooligomerization; that stretch reads QQISLQAEAFQARLKSWFEPLVEDMQRQWAGLVEKVQAAVGASTAPVPSDNH. Positions 278 to 290 are specificity for association with VLDL; sequence RLKSWFEPLVEDM.

This sequence belongs to the apolipoprotein A1/A4/E family. As to quaternary structure, homotetramer. May interact with ABCA1; functionally associated with ABCA1 in the biogenesis of HDLs. May interact with APP/A4 amyloid-beta peptide; the interaction is extremely stable in vitro but its physiological significance is unclear. May interact with MAPT. May interact with MAP2. In the cerebrospinal fluid, interacts with secreted SORL1. Interacts with PMEL; this allows the loading of PMEL luminal fragment on ILVs to induce fibril nucleation. Post-translationally, APOE exists as multiple glycosylated and sialylated glycoforms within cells and in plasma. The extent of glycosylation and sialylation are tissue and context specific. In terms of processing, glycated in plasma VLDL. Phosphorylated by FAM20C in the extracellular medium.

It is found in the secreted. Its subcellular location is the extracellular space. The protein resides in the extracellular matrix. The protein localises to the extracellular vesicle. It localises to the endosome. It is found in the multivesicular body. In terms of biological role, APOE is an apolipoprotein, a protein associating with lipid particles, that mainly functions in lipoprotein-mediated lipid transport between organs via the plasma and interstitial fluids. APOE is a core component of plasma lipoproteins and is involved in their production, conversion and clearance. Apolipoproteins are amphipathic molecules that interact both with lipids of the lipoprotein particle core and the aqueous environment of the plasma. As such, APOE associates with chylomicrons, chylomicron remnants, very low density lipoproteins (VLDL) and intermediate density lipoproteins (IDL) but shows a preferential binding to high-density lipoproteins (HDL). It also binds a wide range of cellular receptors including the LDL receptor/LDLR, the LDL receptor-related proteins LRP1, LRP2 and LRP8 and the very low-density lipoprotein receptor/VLDLR that mediate the cellular uptake of the APOE-containing lipoprotein particles. Finally, APOE also has a heparin-binding activity and binds heparan-sulfate proteoglycans on the surface of cells, a property that supports the capture and the receptor-mediated uptake of APOE-containing lipoproteins by cells. A main function of APOE is to mediate lipoprotein clearance through the uptake of chylomicrons, VLDLs, and HDLs by hepatocytes. APOE is also involved in the biosynthesis by the liver of VLDLs as well as their uptake by peripheral tissues ensuring the delivery of triglycerides and energy storage in muscle, heart and adipose tissues. By participating in the lipoprotein-mediated distribution of lipids among tissues, APOE plays a critical role in plasma and tissues lipid homeostasis. APOE is also involved in two steps of reverse cholesterol transport, the HDLs-mediated transport of cholesterol from peripheral tissues to the liver, and thereby plays an important role in cholesterol homeostasis. First, it is functionally associated with ABCA1 in the biogenesis of HDLs in tissues. Second, it is enriched in circulating HDLs and mediates their uptake by hepatocytes. APOE also plays an important role in lipid transport in the central nervous system, regulating neuron survival and sprouting. The sequence is that of Apolipoprotein E (APOE) from Macaca nemestrina (Pig-tailed macaque).